We begin with the raw amino-acid sequence, 247 residues long: Ribonuclease PH (247 aa).

Phosphate is bound by residues Arg-96 and 134-136 (GTR).

It belongs to the RNase PH family. As to quaternary structure, homohexameric ring arranged as a trimer of dimers.

It catalyses the reaction tRNA(n+1) + phosphate = tRNA(n) + a ribonucleoside 5'-diphosphate. Its function is as follows. Phosphorolytic 3'-5' exoribonuclease that plays an important role in tRNA 3'-end maturation. Removes nucleotide residues following the 3'-CCA terminus of tRNAs; can also add nucleotides to the ends of RNA molecules by using nucleoside diphosphates as substrates, but this may not be physiologically important. Probably plays a role in initiation of 16S rRNA degradation (leading to ribosome degradation) during starvation. The polypeptide is Ribonuclease PH (Tropheryma whipplei (strain TW08/27) (Whipple's bacillus)).